A 184-amino-acid chain; its full sequence is MKVIAVTGYKPFELGIFKNDHPGVECIKKALHRKLITFVEDGLEWVIISGQLGVELWAAEVVFEMQVEYPDLKLAVFTPFLEQEENWKEDNREYYEFILSQADHVDSITKRKYESPEQFKLKNQFFIEKSDALLAVYDEEKPGSPKYIVESAKKKGEIENYHSYFILFSDLQDIIEEEQWNNAE.

It belongs to the UPF0398 family.

The sequence is that of UPF0398 protein BC_1561 from Bacillus cereus (strain ATCC 14579 / DSM 31 / CCUG 7414 / JCM 2152 / NBRC 15305 / NCIMB 9373 / NCTC 2599 / NRRL B-3711).